Here is a 148-residue protein sequence, read N- to C-terminus: MAKREPKYFLVQEDILPEAILKTVMAKDLLLKGAANTVNEAVEKVDLSRSAFYKYKDKVFPFHQWSRGKIVTLALLMEHQPGVLSTVLNIIASVKGSILTINQNLPLQDMANATLSVETAEMNQDLEELLRIIGEVEGVREVRLVGQN.

The region spanning 72–147 (TLALLMEHQP…GVREVRLVGQ (76 aa)) is the ACT domain.

It belongs to the UPF0735 family.

The chain is UPF0735 ACT domain-containing protein Dred_1164 from Desulforamulus reducens (strain ATCC BAA-1160 / DSM 100696 / MI-1) (Desulfotomaculum reducens).